A 173-amino-acid chain; its full sequence is Peptide methionine sulfoxide reductase MsrA (173 aa).

Cysteine 10 is an active-site residue.

Belongs to the MsrA Met sulfoxide reductase family.

The enzyme catalyses L-methionyl-[protein] + [thioredoxin]-disulfide + H2O = L-methionyl-(S)-S-oxide-[protein] + [thioredoxin]-dithiol. It carries out the reaction [thioredoxin]-disulfide + L-methionine + H2O = L-methionine (S)-S-oxide + [thioredoxin]-dithiol. Has an important function as a repair enzyme for proteins that have been inactivated by oxidation. Catalyzes the reversible oxidation-reduction of methionine sulfoxide in proteins to methionine. The chain is Peptide methionine sulfoxide reductase MsrA from Acinetobacter baumannii (strain AB307-0294).